We begin with the raw amino-acid sequence, 204 residues long: Peptidyl-tRNA hydrolase 2 (204 aa).

Position 37 (Tyr37) interacts with tRNA. Residue His42 is the Proton acceptor of the active site. Positions 86, 88, and 134 each coordinate tRNA.

Belongs to the PTH family. As to quaternary structure, monomer.

The protein resides in the cytoplasm. It catalyses the reaction an N-acyl-L-alpha-aminoacyl-tRNA + H2O = an N-acyl-L-amino acid + a tRNA + H(+). Functionally, hydrolyzes ribosome-free peptidyl-tRNAs (with 1 or more amino acids incorporated), which drop off the ribosome during protein synthesis, or as a result of ribosome stalling. In terms of biological role, catalyzes the release of premature peptidyl moieties from peptidyl-tRNA molecules trapped in stalled 50S ribosomal subunits, and thus maintains levels of free tRNAs and 50S ribosomes. This chain is Peptidyl-tRNA hydrolase 2, found in Corynebacterium glutamicum (strain ATCC 13032 / DSM 20300 / JCM 1318 / BCRC 11384 / CCUG 27702 / LMG 3730 / NBRC 12168 / NCIMB 10025 / NRRL B-2784 / 534).